Consider the following 556-residue polypeptide: Formate--tetrahydrofolate ligase (556 aa).

65-72 (TPAGEGKT) contributes to the ATP binding site.

Belongs to the formate--tetrahydrofolate ligase family.

It catalyses the reaction (6S)-5,6,7,8-tetrahydrofolate + formate + ATP = (6R)-10-formyltetrahydrofolate + ADP + phosphate. It participates in one-carbon metabolism; tetrahydrofolate interconversion. In Proteus mirabilis (strain HI4320), this protein is Formate--tetrahydrofolate ligase.